The primary structure comprises 629 residues: Solute carrier family 22 member 14 (629 aa).

The disordered stretch occupies residues 1–21 (MKEDQNYKTAFGSQNSRDTHR). The Cytoplasmic segment spans residues 1 to 67 (MKEDQNYKTA…IGEFGTFQWR (67 aa)). The segment covering 7 to 16 (YKTAFGSQNS) has biased composition (polar residues). Residues 68 to 88 (LVVLTFIPSILSTFFIFSHHF) form a helical membrane-spanning segment. Residues 89 to 183 (LLTAQRPYCN…LVCGNEPNKE (95 aa)) are Extracellular-facing. Residues asparagine 98, asparagine 116, asparagine 124, and asparagine 149 are each glycosylated (N-linked (GlcNAc...) asparagine). Residues 184–204 (NGLTVFLSGVLTGSLLFGFLS) traverse the membrane as a helical segment. Residues 205–209 (DKLGR) are Cytoplasmic-facing. The helical transmembrane segment at 210 to 230 (YPIILLSLLGFLIFGFGTAFV) threads the bilayer. Residues 231–240 (SSFYQYLFFR) lie on the Extracellular side of the membrane. The helical transmembrane segment at 241–261 (FFVAQASVGYAICSVSLVMEW) threads the bilayer. Residues 262–269 (LVGEHRAQ) are Cytoplasmic-facing. The chain crosses the membrane as a helical span at residues 270–290 (AVILQHSFLTIGVILLTGLAY). Topologically, residues 291 to 295 (KVVHW) are extracellular. Residues 296-316 (RLLCLLGGMPMFPLICNIWVL) traverse the membrane as a helical segment. Residues 317-378 (RESPRWLMVR…DFCTNQHLFK (62 aa)) lie on the Cytoplasmic side of the membrane. The chain crosses the membrane as a helical span at residues 379–399 (VVLAIGCVWFTVSYISFTLNL). The Extracellular segment spans residues 400–409 (KMNDFGLDVY). The helical transmembrane segment at 410–430 (FVQMVRSIVAVPARLCCIILL) threads the bilayer. Residues 431-436 (EYFGRK) lie on the Cytoplasmic side of the membrane. Residues 437–457 (WALNLTLFLVTSMCLFLLFLP) form a helical membrane-spanning segment. Residues 458-463 (QEPKST) are Extracellular-facing. The chain crosses the membrane as a helical span at residues 464-484 (IILTLMLAEFSMAGTLSIFFI). The Cytoplasmic segment spans residues 485–496 (YTAELLPTVLRS). Residues 497-517 (TGLGMVSLAWVAGAISSVAIF) form a helical membrane-spanning segment. The Extracellular segment spans residues 518–523 (KQTKTQ). Residues 524-544 (LPIFFCCLCCVLALCFSSLVP) form a helical membrane-spanning segment. The Cytoplasmic portion of the chain corresponds to 545–629 (ETGSQSLRDS…PVQSLKAQPP (85 aa)).

Belongs to the major facilitator (TC 2.A.1) superfamily. Organic cation transporter (TC 2.A.1.19) family. In terms of tissue distribution, testis-specific (at protein level). Specifically expressed in male germ cells (at protein level).

Its subcellular location is the mitochondrion inner membrane. The protein resides in the cell projection. It is found in the cilium. The protein localises to the flagellum membrane. It catalyses the reaction riboflavin(in) = riboflavin(out). Functionally, riboflavin transporter localized at the inner mitochondrial membrane of the spermatozoa midpiece, which is required for male fertility. SLC22A14-mediated riboflavin transport is essential for spermatozoa energy generation and motility: riboflavin is the precursor of FMN and FAD, which are coenzymes of many enzymes in the TCA cycle (the citric acid cycle) in mitochondria. Required for sperm motility and normal sperm flagellar structure. This is Solute carrier family 22 member 14 from Mus musculus (Mouse).